We begin with the raw amino-acid sequence, 435 residues long: tRNA-2-methylthio-N(6)-dimethylallyladenosine synthase (435 aa).

Residues 2–117 (KKASIITYGC…IPQAIEKIEN (116 aa)) form the MTTase N-terminal domain. Residues Cys-11, Cys-47, Cys-80, Cys-154, Cys-158, and Cys-161 each coordinate [4Fe-4S] cluster. Residues 140–370 (FGSDQTASIS…MEVQNKCSFY (231 aa)) form the Radical SAM core domain. The 63-residue stretch at 373-435 (SKYKGRIVKV…KTWTLYGEIV (63 aa)) folds into the TRAM domain.

The protein belongs to the methylthiotransferase family. MiaB subfamily. Monomer. The cofactor is [4Fe-4S] cluster.

It localises to the cytoplasm. It carries out the reaction N(6)-dimethylallyladenosine(37) in tRNA + (sulfur carrier)-SH + AH2 + 2 S-adenosyl-L-methionine = 2-methylsulfanyl-N(6)-dimethylallyladenosine(37) in tRNA + (sulfur carrier)-H + 5'-deoxyadenosine + L-methionine + A + S-adenosyl-L-homocysteine + 2 H(+). In terms of biological role, catalyzes the methylthiolation of N6-(dimethylallyl)adenosine (i(6)A), leading to the formation of 2-methylthio-N6-(dimethylallyl)adenosine (ms(2)i(6)A) at position 37 in tRNAs that read codons beginning with uridine. This Fusobacterium nucleatum subsp. nucleatum (strain ATCC 25586 / DSM 15643 / BCRC 10681 / CIP 101130 / JCM 8532 / KCTC 2640 / LMG 13131 / VPI 4355) protein is tRNA-2-methylthio-N(6)-dimethylallyladenosine synthase.